Reading from the N-terminus, the 538-residue chain is uncharacterized protein (538 aa).

The N-terminal stretch at 1–17 is a signal peptide; the sequence is MSFSATILFSPPSGSEA. The tract at residues 101–131 is disordered; sequence RQGKVSIPDEDGESRAHSSPPEEPGPLKESP. Glycyl lysine isopeptide (Lys-Gly) (interchain with G-Cter in SUMO2) cross-links involve residues Lys-128 and Lys-221. Ser-224 is modified (phosphoserine). Residues 233–253 are disordered; sequence RATPETGPENGTKLPPPRPED. 2 positions are modified to phosphoserine: Ser-285 and Ser-428. The disordered stretch occupies residues 488–523; that stretch reads LPPELYNPNFQEEEDEGGDENAPGSPSFDQPHKTCC.

It localises to the secreted. This is an uncharacterized protein from Homo sapiens (Human).